A 581-amino-acid chain; its full sequence is Transcription activator GAGA (581 aa).

The 66-residue stretch at 34 to 99 folds into the BTB domain; that stretch reads VDCTLAAGGR…VYRGEVSVDH (66 aa). Residues 201 to 397 are interaction with E(bx); sequence VIQAFLPARK…SSGSGSGALS (197 aa). A Phosphothreonine modification is found at Thr237. Disordered stretches follow at residues 298–343 and 364–404; these read ITPA…EQPA and LRHF…SVPQ. A C2H2-type; degenerate zinc finger spans residues 343-366; the sequence is ATCPICYAVIRQSRNLRRHLELRH. Low complexity predominate over residues 381-401; it reads GKKSSSGSSGSGSGALSSSGS.

As to quaternary structure, interacts with Bin1, lolal, corto, ttk and ph-p. Interacts with FACT subunits Ssrp and dre4/SPT16. Interacts with E(bx). Upon ecdysone stimulation, interacts with Nup98. In terms of processing, the N-terminus is blocked. In terms of tissue distribution, expressed in the central nervous system throughout development.

The protein localises to the nucleus. Its subcellular location is the chromosome. Its function is as follows. Transcriptional activator that functions by regulating chromatin structure. Overcomes the repressive effects of chromatin by promoting the open chromatin conformation in promoter gene regions, thereby allowing access to other transcription factors. Binds to DNA Polycomb response elements (PREs) at the bithorax complex and to the proximal region of the engrailed promoter, and positively regulates transcription of many genes including homeotic ones. Involved in zygotic genome activation (ZGA), a critical event in early embryonic development during which the developmental control passes from maternally provided mRNAs to the expression of the zygotic genome after fertilization. Binds to the DNA sequence (GA)n, with optimal binding to the pentamer 5'-GAGAG-3'. Binds DNA as an oligomer. May also act as a transcriptional repressor, maintaining the repressed state of genes including lolal, and down-regulating its own transcription. Required for dosage compensation in males and may be involved in oogenesis. Also has a role in nuclear division. This Drosophila melanogaster (Fruit fly) protein is Transcription activator GAGA (Trl).